We begin with the raw amino-acid sequence, 100 residues long: Urease subunit gamma (100 aa).

This sequence belongs to the urease gamma subunit family. Heterotrimer of UreA (gamma), UreB (beta) and UreC (alpha) subunits. Three heterotrimers associate to form the active enzyme.

The protein resides in the cytoplasm. It catalyses the reaction urea + 2 H2O + H(+) = hydrogencarbonate + 2 NH4(+). Its pathway is nitrogen metabolism; urea degradation; CO(2) and NH(3) from urea (urease route): step 1/1. This chain is Urease subunit gamma, found in Polynucleobacter asymbioticus (strain DSM 18221 / CIP 109841 / QLW-P1DMWA-1) (Polynucleobacter necessarius subsp. asymbioticus).